Here is a 1057-residue protein sequence, read N- to C-terminus: Protein transport protein Sec16B (1057 aa).

Positions Met-1–Pro-15 are enriched in polar residues. The disordered stretch occupies residues Met-1–Ser-86. Over residues Gln-45–Gln-63 the composition is skewed to basic and acidic residues. Ser-70, Ser-137, Ser-161, and Ser-185 each carry phosphoserine. The tract at residues Ser-185–Ser-220 is disordered. The segment covering Ala-201–Asn-213 has biased composition (polar residues). Ser-245 carries the post-translational modification Phosphoserine. The interval Ala-263 to Thr-708 is central conserved domain (CCD); required for localization to endoplasmic reticulum exit sites. The segment covering Glu-704–Asp-715 has biased composition (basic and acidic residues). 2 disordered regions span residues Glu-704–Glu-778 and Ala-849–Cys-1057. The segment covering Gly-737 to Thr-764 has biased composition (polar residues). A Phosphothreonine modification is found at Thr-856. A phosphoserine mark is found at Ser-866, Ser-869, Ser-872, and Ser-881. The segment covering Gly-883 to Asn-903 has biased composition (basic and acidic residues). The segment covering Ser-906–Ser-926 has biased composition (low complexity). Residues Gly-927–Glu-938 are compositionally biased toward acidic residues. A compositionally biased stretch (gly residues) spans Glu-990 to Gly-999. The segment covering Asn-1028–Arg-1043 has biased composition (polar residues).

Belongs to the SEC16 family. In terms of assembly, SEC16A and SEC16B are each present in multiple copies in a heteromeric complex. Interacts with TFG. Interacts with SEC13. As to expression, liver, kidney, heart, spleen and brain.

It is found in the endoplasmic reticulum membrane. Its subcellular location is the golgi apparatus membrane. Plays a role in the organization of the endoplasmic reticulum exit sites (ERES), also known as transitional endoplasmic reticulum (tER). Required for secretory cargo traffic from the endoplasmic reticulum to the Golgi apparatus. Involved in peroxisome biogenesis. Regulates the transport of peroxisomal biogenesis factors PEX3 and PEX16 from the ER to peroxisomes. This chain is Protein transport protein Sec16B (Sec16b), found in Rattus norvegicus (Rat).